Consider the following 298-residue polypeptide: 4-hydroxy-tetrahydrodipicolinate synthase (298 aa).

A pyruvate-binding site is contributed by T51. Y139 (proton donor/acceptor) is an active-site residue. The Schiff-base intermediate with substrate role is filled by K167. I209 provides a ligand contact to pyruvate.

It belongs to the DapA family. As to quaternary structure, homotetramer; dimer of dimers.

Its subcellular location is the cytoplasm. The enzyme catalyses L-aspartate 4-semialdehyde + pyruvate = (2S,4S)-4-hydroxy-2,3,4,5-tetrahydrodipicolinate + H2O + H(+). Its pathway is amino-acid biosynthesis; L-lysine biosynthesis via DAP pathway; (S)-tetrahydrodipicolinate from L-aspartate: step 3/4. Its function is as follows. Catalyzes the condensation of (S)-aspartate-beta-semialdehyde [(S)-ASA] and pyruvate to 4-hydroxy-tetrahydrodipicolinate (HTPA). The sequence is that of 4-hydroxy-tetrahydrodipicolinate synthase from Haemophilus influenzae (strain PittGG).